A 126-amino-acid polypeptide reads, in one-letter code: Holo-[acyl-carrier-protein] synthase (126 aa).

Aspartate 9 and glutamate 58 together coordinate Mg(2+).

Belongs to the P-Pant transferase superfamily. AcpS family. The cofactor is Mg(2+).

It is found in the cytoplasm. It catalyses the reaction apo-[ACP] + CoA = holo-[ACP] + adenosine 3',5'-bisphosphate + H(+). Functionally, transfers the 4'-phosphopantetheine moiety from coenzyme A to a Ser of acyl-carrier-protein. The sequence is that of Holo-[acyl-carrier-protein] synthase from Escherichia coli (strain K12 / MC4100 / BW2952).